Consider the following 350-residue polypeptide: Small ribosomal subunit biogenesis GTPase RsgA (350 aa).

The segment covering 1–17 has biased composition (polar residues); it reads MSKNKLSKGQQRRVNAN. Residues 1-27 form a disordered region; that stretch reads MSKNKLSKGQQRRVNANHQRRLKTSAE. The 170-residue stretch at 104 to 273 folds into the CP-type G domain; that stretch reads TSVLTRPDFY…VIDSPGVREF (170 aa). GTP contacts are provided by residues 160-163 and 214-222; these read NKID and GQSGVGKSS. Zn(2+)-binding residues include cysteine 297, cysteine 302, histidine 304, and cysteine 310.

Belongs to the TRAFAC class YlqF/YawG GTPase family. RsgA subfamily. Monomer. Associates with 30S ribosomal subunit, binds 16S rRNA. Zn(2+) is required as a cofactor.

It localises to the cytoplasm. In terms of biological role, one of several proteins that assist in the late maturation steps of the functional core of the 30S ribosomal subunit. Helps release RbfA from mature subunits. May play a role in the assembly of ribosomal proteins into the subunit. Circularly permuted GTPase that catalyzes slow GTP hydrolysis, GTPase activity is stimulated by the 30S ribosomal subunit. In Salmonella typhi, this protein is Small ribosomal subunit biogenesis GTPase RsgA.